Reading from the N-terminus, the 107-residue chain is Thioredoxin (107 aa).

Residues 2–107 (SVSQVTDASF…LASTLNKYIS (106 aa)) enclose the Thioredoxin domain. Residues Cys-31 and Cys-34 each act as nucleophile in the active site. Cys-31 and Cys-34 form a disulfide bridge.

This sequence belongs to the thioredoxin family.

It is found in the plastid. Its subcellular location is the chloroplast. Participates in various redox reactions through the reversible oxidation of its active center dithiol to a disulfide and catalyzes dithiol-disulfide exchange reactions. In Pyropia yezoensis (Susabi-nori), this protein is Thioredoxin (trxA).